We begin with the raw amino-acid sequence, 614 residues long: Probable glutamate--tRNA ligase, cytoplasmic (614 aa).

Position 130–132 (130–132 (RFA)) interacts with L-glutamate. A 'HIGH' region motif is present at residues 135-144 (PSGCLHIGHL). His-140 is a binding site for ATP. L-glutamate-binding positions include Asp-166, 303-307 (YDFVC), and Arg-321. ATP-binding positions include Glu-324 and 359 to 363 (VLSKR). A 'KMSKS' region motif is present at residues 359–363 (VLSKR).

Belongs to the class-I aminoacyl-tRNA synthetase family. Glutamate--tRNA ligase type 2 subfamily.

It is found in the cytoplasm. The catalysed reaction is tRNA(Glu) + L-glutamate + ATP = L-glutamyl-tRNA(Glu) + AMP + diphosphate. The chain is Probable glutamate--tRNA ligase, cytoplasmic from Vairimorpha ceranae (strain BRL01) (Microsporidian parasite).